A 128-amino-acid chain; its full sequence is Thor profilin (128 aa).

The protein belongs to the Asgard profilin family.

It localises to the cytoplasm. The protein resides in the cytoskeleton. Functionally, has no profilin activity against rabbit actin. This is Thor profilin from Thorarchaeota archaeon (strain AB_25).